Reading from the N-terminus, the 64-residue chain is Large ribosomal subunit protein bL35 (64 aa).

This sequence belongs to the bacterial ribosomal protein bL35 family.

This is Large ribosomal subunit protein bL35 from Chloroherpeton thalassium (strain ATCC 35110 / GB-78).